Consider the following 226-residue polypeptide: ATP synthase subunit a (226 aa).

Transmembrane regions (helical) follow at residues 18–38 (FITGFFVVLTAVLMFLISLGA), 76–96 (YFPLAGTIALYVFFSNMIGII), 105–125 (SWSFTLVLALIVFFYYHFEGI), 134–154 (FAHFAGPVKWLAPFMFPIEII), 179–199 (LIMLLLVPWVIPVAPFMVLFF), and 201–221 (GILQAFVFMILTYVYLAGAVL).

The protein belongs to the ATPase A chain family. As to quaternary structure, F-type ATPases have 2 components, CF(1) - the catalytic core - and CF(0) - the membrane proton channel. CF(1) has five subunits: alpha(3), beta(3), gamma(1), delta(1), epsilon(1). CF(0) has three main subunits: a(1), b(2) and c(9-12). The alpha and beta chains form an alternating ring which encloses part of the gamma chain. CF(1) is attached to CF(0) by a central stalk formed by the gamma and epsilon chains, while a peripheral stalk is formed by the delta and b chains.

It localises to the cell inner membrane. In terms of biological role, key component of the proton channel; it plays a direct role in the translocation of protons across the membrane. This Helicobacter acinonychis (strain Sheeba) protein is ATP synthase subunit a.